The following is a 484-amino-acid chain: Putative transporter B0252.3 (484 aa).

Helical transmembrane passes span 43–63 (ILTC…TGLC), 95–115 (STTT…PPLA), 121–141 (LPVF…SAFS), 144–164 (IMMF…AGLA), 183–203 (VYFG…AYIL), 208–228 (YLMF…YMTV), 286–306 (MFIV…FIYF), 321–341 (LNFV…PIFM), 348–368 (VLIS…VLSS), 373–393 (IHFW…IYMF), and 433–453 (LAPA…TLIL).

It belongs to the major facilitator superfamily. Sugar transporter (TC 2.A.1.1) family.

The protein localises to the membrane. The sequence is that of Putative transporter B0252.3 from Caenorhabditis elegans.